A 433-amino-acid chain; its full sequence is Histidinol dehydrogenase (433 aa).

3 residues coordinate NAD(+): Y129, Q191, and N214. Residues S237, Q259, and H262 each contribute to the substrate site. Zn(2+) contacts are provided by Q259 and H262. Catalysis depends on proton acceptor residues E326 and H327. Substrate contacts are provided by H327, D360, E414, and H419. D360 contributes to the Zn(2+) binding site. H419 is a binding site for Zn(2+).

This sequence belongs to the histidinol dehydrogenase family. Zn(2+) serves as cofactor.

The enzyme catalyses L-histidinol + 2 NAD(+) + H2O = L-histidine + 2 NADH + 3 H(+). Its pathway is amino-acid biosynthesis; L-histidine biosynthesis; L-histidine from 5-phospho-alpha-D-ribose 1-diphosphate: step 9/9. Functionally, catalyzes the sequential NAD-dependent oxidations of L-histidinol to L-histidinaldehyde and then to L-histidine. The chain is Histidinol dehydrogenase from Methanosarcina barkeri (strain Fusaro / DSM 804).